Consider the following 262-residue polypeptide: Iso-A82775C biosynthesis cluster protein B (262 aa).

Part of the gene cluster that mediates the biosynthesis of iso-A82775C, a enylepoxycyclohexane and biosynthetic precursor of the chloropestolide anticancer natural products. Within the cluster, the prenyltransferase iacE prenylates siccayne to generate pestalodiol E, using dimethylallyl diphosphate (DMAPP) as cosubstrate. The probable oxidoreductase iacF is then involved in the epoxidation of pestalodiol F to pestalodiol F, which is further converted to pestalofone A by the short-chain dehydrogenase/reductase iacG. Iso-A82775C is subsequently generated from pestalofone A by the short-chain dehydrogenase/reductase iacC. Iso-A82775C is further condensed with maldoxin via a Diels-Alder reaction to produce the anticancer natural products chloropestolides A to E. This Pestalotiopsis fici (strain W106-1 / CGMCC3.15140) protein is Iso-A82775C biosynthesis cluster protein B.